A 391-amino-acid chain; its full sequence is Putative gustatory receptor 98a (391 aa).

Residues 1–31 (MEQMSGELHAASLLYMRRLMKCLGMLPFGQN) are Cytoplasmic-facing. Residues 32 to 52 (LFSKGFCYVLLFVSLGFSSYW) form a helical membrane-spanning segment. Residues 53–74 (RFSFDYEFDYDFLNDRFSSTID) lie on the Extracellular side of the membrane. Residues 75 to 95 (LSNFVALVLGHAIIVLELLWG) form a helical membrane-spanning segment. Topologically, residues 96–128 (NCSKDVDRQLQAIHSQIKLQLGTSNSTDRVRRY) are cytoplasmic. Residues 129 to 149 (CNWIYGSLIIRWLIFIVVTIY) traverse the membrane as a helical segment. Over 150–173 (SNRALTINATYSELVFLARFSEFT) the chain is Extracellular. An N-linked (GlcNAc...) asparagine glycan is attached at Asn157. The helical transmembrane segment at 174–194 (LYCAVILFIYQELIVGGSNVL) threads the bilayer. At 195-239 (DELYRTRYEMWSIRRLSLQKLAKLQAIHNSLWQAIRCLECYFQLS) the chain is on the cytoplasmic side. The helical transmembrane segment at 240-260 (LITLLMKFFIDTSALPYWLYL) threads the bilayer. Topologically, residues 261-272 (SRVEHTRVAVQH) are extracellular. The helical transmembrane segment at 273 to 293 (YVATVECIKLLEIVVPCYLCT) threads the bilayer. Residues 294–347 (RCDAMQRKFLSMFYTVTTDRRSSQLNAALRSLNLQLSQEKYKFSAGGMVDINTE) lie on the Cytoplasmic side of the membrane. The chain crosses the membrane as a helical span at residues 348 to 368 (MLGKFFFGMISYIVICIQFSI). Residues 369–391 (NFRAKKMSNEQMSQNITSTSAPI) are Extracellular-facing. Asn383 is a glycosylation site (N-linked (GlcNAc...) asparagine).

The protein belongs to the insect chemoreceptor superfamily. Gustatory receptor (GR) family. Gr2a subfamily.

Its subcellular location is the cell membrane. Functionally, probable gustatory receptor which mediates acceptance or avoidance behavior, depending on its substrates. This Drosophila melanogaster (Fruit fly) protein is Putative gustatory receptor 98a (Gr98a).